Consider the following 147-residue polypeptide: DNA base-flipping protein (147 aa).

The protein belongs to the MGMT family. ATL subfamily. As to quaternary structure, interacts with several proteins, including UvrA, UvrD and the three subunits of the RNA polymerase.

Its function is as follows. Involved in DNA damage recognition. Binds DNA containing O(6)-methylguanine and larger O(6)-alkylguanine adducts. Binds to the damaged base and flips the base out of the DNA duplex into an extrahelical conformation, which allows processing by repair proteins. Also affects the regulation of gene expression in response to alkylation. The polypeptide is DNA base-flipping protein (Thermus thermophilus (strain ATCC 27634 / DSM 579 / HB8)).